The sequence spans 153 residues: MYAIVRLRGQVNVRYTIEDTMKMLRLHKVNHCVLVPENPHFKGMVQKVKDYVAFGKIDANTLAEILENRGRLEGDTRLTEEYIRENTAYDSIQAFAEAVVNGETTLKSVPKLKPVFRLHPPRKGHAGIKRTVQQGGELGDHGDGINALLHKMR.

The protein belongs to the universal ribosomal protein uL30 family. Part of the 50S ribosomal subunit.

In Methanosarcina barkeri (strain Fusaro / DSM 804), this protein is Large ribosomal subunit protein uL30.